We begin with the raw amino-acid sequence, 479 residues long: Kynurenine 3-monooxygenase (479 aa).

FAD-binding positions include valine 19, 37-40 (YEAR), and alanine 57. 2 residues coordinate L-kynurenine: arginine 85 and tyrosine 99. FAD is bound by residues arginine 111, leucine 136, threonine 172, aspartate 304, and 317-318 (MN). L-kynurenine is bound by residues asparagine 363 and tyrosine 398. The next 2 helical transmembrane spans lie at 385–404 (FLHA…VAFT) and 425–445 (GLFV…VHHL).

It belongs to the aromatic-ring hydroxylase family. KMO subfamily. The cofactor is FAD. As to expression, expressed by organs containing secondary lymphoid tissue, such as the lung, spleen, mesenteric lymph node, thymus and peripheral lymph nodes.

It localises to the mitochondrion outer membrane. It carries out the reaction L-kynurenine + NADPH + O2 + H(+) = 3-hydroxy-L-kynurenine + NADP(+) + H2O. Its pathway is cofactor biosynthesis; NAD(+) biosynthesis; quinolinate from L-kynurenine: step 1/3. Its function is as follows. Catalyzes the hydroxylation of L-kynurenine (L-Kyn) to form 3-hydroxy-L-kynurenine (L-3OHKyn). Required for synthesis of quinolinic acid, a neurotoxic NMDA receptor antagonist and potential endogenous inhibitor of NMDA receptor signaling in axonal targeting, synaptogenesis and apoptosis during brain development. Quinolinic acid may also affect NMDA receptor signaling in pancreatic beta cells, osteoblasts, myocardial cells, and the gastrointestinal tract. This Mus musculus (Mouse) protein is Kynurenine 3-monooxygenase.